The sequence spans 137 residues: Phosphoribosyl-AMP cyclohydrolase (137 aa).

Residue D83 coordinates Mg(2+). C84 provides a ligand contact to Zn(2+). D85 and D87 together coordinate Mg(2+). The Zn(2+) site is built by C101 and C108.

The protein belongs to the PRA-CH family. As to quaternary structure, homodimer. Mg(2+) serves as cofactor. It depends on Zn(2+) as a cofactor.

Its subcellular location is the cytoplasm. The enzyme catalyses 1-(5-phospho-beta-D-ribosyl)-5'-AMP + H2O = 1-(5-phospho-beta-D-ribosyl)-5-[(5-phospho-beta-D-ribosylamino)methylideneamino]imidazole-4-carboxamide. The protein operates within amino-acid biosynthesis; L-histidine biosynthesis; L-histidine from 5-phospho-alpha-D-ribose 1-diphosphate: step 3/9. In terms of biological role, catalyzes the hydrolysis of the adenine ring of phosphoribosyl-AMP. In Burkholderia mallei (strain ATCC 23344), this protein is Phosphoribosyl-AMP cyclohydrolase.